The following is a 260-amino-acid chain: Putative cysteine-rich repeat secretory protein 23 (260 aa).

The first 31 residues, 1 to 31 (MSSSFVYKSLFLVPILAVVAMQLSFVQSVLS), serve as a signal peptide directing secretion. 2 Gnk2-homologous domains span residues 38–136 (YLHH…NISY) and 142–254 (LPEQ…LYLF).

The protein belongs to the cysteine-rich repeat secretory protein family.

Its subcellular location is the secreted. The polypeptide is Putative cysteine-rich repeat secretory protein 23 (CRRSP23) (Arabidopsis thaliana (Mouse-ear cress)).